A 567-amino-acid chain; its full sequence is Glutamine--tRNA ligase (567 aa).

Residues 47-57 carry the 'HIGH' region motif; it reads PEPNGYLHIGH. ATP-binding positions include 48 to 50 and 54 to 60; these read EPN and HIGHAKS. Residues Asp80 and Tyr225 each contribute to the L-glutamine site. Residues Thr244 and 274–275 contribute to the ATP site; that span reads RL. A 'KMSKS' region motif is present at residues 281–285; sequence ITSKR.

The protein belongs to the class-I aminoacyl-tRNA synthetase family. Monomer.

It localises to the cytoplasm. The catalysed reaction is tRNA(Gln) + L-glutamine + ATP = L-glutaminyl-tRNA(Gln) + AMP + diphosphate. The sequence is that of Glutamine--tRNA ligase from Pseudomonas putida (strain ATCC 47054 / DSM 6125 / CFBP 8728 / NCIMB 11950 / KT2440).